The primary structure comprises 85 residues: Arminin 2b (85 aa).

The first 18 residues, 1-18 (MKTVFAILFLAFIALTYA), serve as a signal peptide directing secretion. Residues 19–57 (RSYEDVKEEIKNEIEKEILEDLEEESDELNDKSKEINDA) constitute a propeptide that is removed on maturation. Position 82 is an alanine amide (A82).

It belongs to the arminin family. Expressed in entodermal epithelium along the body column.

It localises to the secreted. Its subcellular location is the target cell membrane. Antimicrobial peptide with a broad-spectrum antimicrobial activity. Keeps its antibacterial activity under a wide range of salt concentrations that mimic physiological conditions of human blood, which is surprising, since Hydra is an obligate freshwater animal with nearly no salt tolerance. Does not affect red blood cells. The protein is Arminin 2b of Hydra vulgaris (Hydra).